Reading from the N-terminus, the 377-residue chain is MENLSSACTHFCFDLFKKINENNSTGNLFFSPISLSTALAMVFLGTKGKTAEQMSKTLHFDAVKDLHSNFQTLNAEINKKDVSTYALNLANRLFGEKTFNFLPNFLSSVKKQYSADLGTVDFISALEDARKEINKWVSEQTKGKIPEVLSTGTVDRSTKLVLVNAIYFKGDWAKKFNAEHTTDMPFQLNKKEQKTVKMMYQKEKLPFNYIPDINCRILELPYVDYELSMIIILPDNINDDTTGLQQLEKELSLEKIHEWTENMMPTDVHIHLPKFKLEDSYKLKSQLAGMGMVDLFNSGSADLSGMSGSNNLFLSEVIHKSFVEVNEEGTEAAAASAGIAMMCMMREEEFNADHPFLFLIRHNATKSILFFGRYSSP.

Methionine 1 bears the N-acetylmethionine mark.

Belongs to the serpin family. Ov-serpin subfamily.

It localises to the cytoplasm. Its function is as follows. Regulates the activity of the neutrophil proteases. This is Leukocyte elastase inhibitor (serpinb1) from Xenopus laevis (African clawed frog).